The primary structure comprises 233 residues: Large ribosomal subunit protein uL1 (233 aa).

The protein belongs to the universal ribosomal protein uL1 family. Part of the 50S ribosomal subunit.

Functionally, binds directly to 23S rRNA. The L1 stalk is quite mobile in the ribosome, and is involved in E site tRNA release. Protein L1 is also a translational repressor protein, it controls the translation of the L11 operon by binding to its mRNA. The sequence is that of Large ribosomal subunit protein uL1 from Rhizobium etli (strain ATCC 51251 / DSM 11541 / JCM 21823 / NBRC 15573 / CFN 42).